We begin with the raw amino-acid sequence, 218 residues long: ATP-dependent Clp protease proteolytic subunit 2 (218 aa).

Ser114 acts as the Nucleophile in catalysis. Residue His139 is part of the active site.

Belongs to the peptidase S14 family. Fourteen ClpP subunits assemble into 2 heptameric rings which stack back to back to give a disk-like structure with a central cavity, resembling the structure of eukaryotic proteasomes.

The protein localises to the cytoplasm. The catalysed reaction is Hydrolysis of proteins to small peptides in the presence of ATP and magnesium. alpha-casein is the usual test substrate. In the absence of ATP, only oligopeptides shorter than five residues are hydrolyzed (such as succinyl-Leu-Tyr-|-NHMec, and Leu-Tyr-Leu-|-Tyr-Trp, in which cleavage of the -Tyr-|-Leu- and -Tyr-|-Trp bonds also occurs).. Its function is as follows. Cleaves peptides in various proteins in a process that requires ATP hydrolysis. Has a chymotrypsin-like activity. Plays a major role in the degradation of misfolded proteins. Probably partially responsible for degradation of ECF sigma factor SigR prime. The protein is ATP-dependent Clp protease proteolytic subunit 2 of Streptomyces coelicolor (strain ATCC BAA-471 / A3(2) / M145).